Consider the following 449-residue polypeptide: Packaging protein 1 (449 aa).

The segment at 1 to 77 is disordered; the sequence is METRGRRPAA…QPAKRGDMLD (77 aa). 171 to 178 provides a ligand contact to ATP; the sequence is GPTGCGKS. Residues 440–449 are DNA-binding; the sequence is RAYRARKTPK.

This sequence belongs to the adenoviridae packaging protein 1 family. Homodimer. Part of a genome packaging complex composed of packaging proteins 1, 2 and 3; this complex specifically binds to the packaging sequence on the left end of viral genomic DNA and performs packaging of the viral genome. Interacts with protein 33K.

It localises to the virion. Its subcellular location is the host nucleus. The protein localises to the host nucleoplasm. It is found in the host nucleolus. Component of the packaging machinery which encapsidates the viral DNA into preformed capsids and transcriptional activator of the viral major late promoter (MLP). Binds, along with packaging proteins 2 and 3, to the specific packaging sequence on the left end of viral genomic DNA and displays ATPase activity thereby providing the power stroke of the packaging machinery. The activity of packaging protein IVa2 is stimulated by protein 33K which acts as a terminase. May be the protein that pumps DNA into the capsid powered by ATP hydrolysis. Specifically binds to the 5'-CG-3' nucleotides of the repeats making up the packaging sequence. Component of the DEF-A and DEF-B transcription factors that bind downstream elements of the major late promoter (MLP), and stimulate transcription from the MLP after initiation of viral DNA replication. DEF-A is a heterodimer packaging proteins 1 and 2 and DEF-B is a homodimer of packaging protein 1. This is Packaging protein 1 from Homo sapiens (Human).